Reading from the N-terminus, the 103-residue chain is MQNQRIRIRLKAFDYKLIDASTAEIVETAKRTGAQVRGPIPLPTRKERFTVLISPHVNKDARDQYEIRTHKRLIDIVEPTDKTVDALMRLDLAAGVDVQISLG.

It belongs to the universal ribosomal protein uS10 family. Part of the 30S ribosomal subunit.

Functionally, involved in the binding of tRNA to the ribosomes. This is Small ribosomal subunit protein uS10 from Vibrio cholerae serotype O1 (strain ATCC 39541 / Classical Ogawa 395 / O395).